Consider the following 238-residue polypeptide: 1-(5-phosphoribosyl)-5-[(5-phosphoribosylamino)methylideneamino] imidazole-4-carboxamide isomerase (238 aa).

The Proton acceptor role is filled by aspartate 8. The Proton donor role is filled by aspartate 129.

Belongs to the HisA/HisF family.

The protein localises to the cytoplasm. The enzyme catalyses 1-(5-phospho-beta-D-ribosyl)-5-[(5-phospho-beta-D-ribosylamino)methylideneamino]imidazole-4-carboxamide = 5-[(5-phospho-1-deoxy-D-ribulos-1-ylimino)methylamino]-1-(5-phospho-beta-D-ribosyl)imidazole-4-carboxamide. Its pathway is amino-acid biosynthesis; L-histidine biosynthesis; L-histidine from 5-phospho-alpha-D-ribose 1-diphosphate: step 4/9. In Brachyspira hyodysenteriae (strain ATCC 49526 / WA1), this protein is 1-(5-phosphoribosyl)-5-[(5-phosphoribosylamino)methylideneamino] imidazole-4-carboxamide isomerase.